Here is a 719-residue protein sequence, read N- to C-terminus: Solute carrier organic anion transporter family member 6A1 (719 aa).

The segment at 1–46 (MFVGVARHSGSQDEVSRGVEPLEAARAQPAKDRRAKGTPKSSKPGK) is disordered. The Cytoplasmic portion of the chain corresponds to 1–106 (MFVGVARHSG…TCCECCNNIR (106 aa)). Residues 33–46 (RRAKGTPKSSKPGK) are compositionally biased toward basic residues. The chain crosses the membrane as a helical span at residues 107 to 126 (CFMIFYCILLICQGVVFGLI). Residues 127-145 (DVSIGDFQKEYQLKTIEKL) are Extracellular-facing. Residues 146–166 (ALEKSYDISSGLVAIFIAFYG) form a helical membrane-spanning segment. Over 167 to 171 (DRKKV) the chain is Cytoplasmic. The helical transmembrane segment at 172 to 196 (IWFVASSFLIGLGSLLCAFPSINEE) threads the bilayer. At 197–223 (NKQSKVGIEDICEEIKVVSGCQSSGIS) the chain is on the extracellular side. The helical transmembrane segment at 224-254 (FQSKYLSFFILGQTVQGIAGMPLYILGITFI) threads the bilayer. The Cytoplasmic segment spans residues 255–274 (DENVATHSAGIYLGIAECTS). Residues 275–295 (MIGYALGYVLGAPLVKVPENT) form a helical membrane-spanning segment. The Extracellular portion of the chain corresponds to 296–311 (TSATNTTVNNGSPEWL). N-linked (GlcNAc...) asparagine glycosylation occurs at Asn300. A helical transmembrane segment spans residues 312 to 336 (WTWWINFLFAAVVAWCTLIPLSCFP). At 337 to 378 (NNMPGSTRIKARKRKQLHFFDSRLKDLKLGTNIKDLCAALWI) the chain is on the cytoplasmic side. Residues 379-400 (LMKNPVLICLALSKATEYLVII) traverse the membrane as a helical segment. At 401–420 (GASEFLPIYLENQFILTPTV) the chain is on the extracellular side. Residues 421–444 (ATTLAGLVLIPGGALGQLLGGVIV) form a helical membrane-spanning segment. The Cytoplasmic portion of the chain corresponds to 445 to 448 (STLE). The chain crosses the membrane as a helical span at residues 449–472 (MSCKALMRFIMVTSVISLILLVFI). The Extracellular segment spans residues 473-581 (IFVRCNPVQF…DAKCYKLPLF (109 aa)). The 56-residue stretch at 496–551 (GNLTAPCNEKCRCSSSIYSSICGRDDIEYFSPCFAGCTYSKAQNQKKMYYNCSCIK) folds into the Kazal-like domain. Residue Asn497 is glycosylated (N-linked (GlcNAc...) asparagine). 3 disulfides stabilise this stretch: Cys502–Cys532, Cys508–Cys528, and Cys517–Cys549. Asn546 is a glycosylation site (N-linked (GlcNAc...) asparagine). A helical transmembrane segment spans residues 582-604 (IAFIFSTLIFSGFSGVPIVLAMT). Residues 605-613 (RVVPDKLRS) are Cytoplasmic-facing. Residues 614–639 (LALGVSYVILRIFGTIPGPSIFKMSG) form a helical membrane-spanning segment. At 640-673 (ETSCILRDVNKCGHTGRCWIYNKTKMAFLLVGIC) the chain is on the extracellular side. Asn661 carries an N-linked (GlcNAc...) asparagine glycan. The helical transmembrane segment at 674-691 (FLCKLCTIIFTTIAFFIY) threads the bilayer. Over 692–719 (KRRLNENTDFPDVTVKNPKVKKKEETDL) the chain is Cytoplasmic.

Belongs to the organo anion transporter (TC 2.A.60) family. Strongly expressed in testis. Weakly expressed in spleen, brain, fetal brain and placenta. Detected in lung tumors.

Its subcellular location is the cell membrane. The polypeptide is Solute carrier organic anion transporter family member 6A1 (SLCO6A1) (Homo sapiens (Human)).